The primary structure comprises 222 residues: 2-C-methyl-D-erythritol 4-phosphate cytidylyltransferase (222 aa).

Belongs to the IspD/TarI cytidylyltransferase family. IspD subfamily.

The enzyme catalyses 2-C-methyl-D-erythritol 4-phosphate + CTP + H(+) = 4-CDP-2-C-methyl-D-erythritol + diphosphate. Its pathway is isoprenoid biosynthesis; isopentenyl diphosphate biosynthesis via DXP pathway; isopentenyl diphosphate from 1-deoxy-D-xylulose 5-phosphate: step 2/6. Functionally, catalyzes the formation of 4-diphosphocytidyl-2-C-methyl-D-erythritol from CTP and 2-C-methyl-D-erythritol 4-phosphate (MEP). This Porphyromonas gingivalis (strain ATCC BAA-308 / W83) protein is 2-C-methyl-D-erythritol 4-phosphate cytidylyltransferase.